Reading from the N-terminus, the 158-residue chain is Ribonuclease H (158 aa).

The RNase H type-1 domain maps to 3–144 (ELKLIHIFTD…CDQLARAAAE (142 aa)). Mg(2+) contacts are provided by Asp-12, Glu-50, Asp-72, and Asp-136.

The protein belongs to the RNase H family. As to quaternary structure, monomer. It depends on Mg(2+) as a cofactor.

The protein resides in the cytoplasm. It catalyses the reaction Endonucleolytic cleavage to 5'-phosphomonoester.. Its function is as follows. Endonuclease that specifically degrades the RNA of RNA-DNA hybrids. This Shewanella sp. (strain MR-4) protein is Ribonuclease H.